A 437-amino-acid chain; its full sequence is Histidine--tRNA ligase (437 aa).

Belongs to the class-II aminoacyl-tRNA synthetase family. In terms of assembly, homodimer.

Its subcellular location is the cytoplasm. It carries out the reaction tRNA(His) + L-histidine + ATP = L-histidyl-tRNA(His) + AMP + diphosphate + H(+). This Opitutus terrae (strain DSM 11246 / JCM 15787 / PB90-1) protein is Histidine--tRNA ligase.